Consider the following 620-residue polypeptide: ATP-dependent RNA helicase ROK1 (620 aa).

Residues 53–115 (SSLDFFGDHP…PLPKSLHTNL (63 aa)) are disordered. Positions 58 to 70 (FGDHPHPQHKPEP) are enriched in basic and acidic residues. The span at 71–82 (EPESESESDFES) shows a compositional bias: acidic residues. Residues 142 to 150 (NIHSLWGVQ) carry the Q motif motif. The Helicase ATP-binding domain occupies 154–382 (GGCLLEDRDT…KKWLKDGGVR (229 aa)). 167-174 (APTGSGKT) serves as a coordination point for ATP. The interval 244 to 292 (ESAPGEAVKTGEDGDSEMKDGEDSGDEEEDEDDNESTGSVDEFAPKVSG) is disordered. A compositionally biased stretch (basic and acidic residues) spans 252 to 265 (KTGEDGDSEMKDGE). Acidic residues predominate over residues 266 to 278 (DSGDEEEDEDDNE). A DEAD box motif is present at residues 329–332 (DESD). Residues 394–556 (TVDQSLLYTG…PVPEYMLDMK (163 aa)) form the Helicase C-terminal domain. The segment at 556–620 (KKPTKNEKKK…GNEEKNDDEE (65 aa)) is disordered. The segment covering 562–575 (EKKKLAKAPPKRKA) has biased composition (basic residues). 2 stretches are compositionally biased toward basic and acidic residues: residues 582 to 598 (DLNR…VEAS) and 605 to 614 (ERKGKGGNEE).

The protein belongs to the DEAD box helicase family. DDX52/ROK1 subfamily. Interacts with the U3 snoRNA and is associated with the 90S and 40S pre-ribosomes.

It localises to the nucleus. The protein resides in the nucleolus. The catalysed reaction is ATP + H2O = ADP + phosphate + H(+). In terms of biological role, ATP-dependent RNA helicase involved in 40S ribosomal subunit biogenesis. Required for the processing and cleavage of 35S pre-rRNA at sites A0, A1, and A2, leading to mature 18S rRNA. The protein is ATP-dependent RNA helicase ROK1 (ROK1) of Cryptococcus neoformans var. neoformans serotype D (strain B-3501A) (Filobasidiella neoformans).